The primary structure comprises 272 residues: 2-C-methyl-D-erythritol 4-phosphate cytidylyltransferase (272 aa).

Belongs to the IspD/TarI cytidylyltransferase family. IspD subfamily.

It carries out the reaction 2-C-methyl-D-erythritol 4-phosphate + CTP + H(+) = 4-CDP-2-C-methyl-D-erythritol + diphosphate. It participates in isoprenoid biosynthesis; isopentenyl diphosphate biosynthesis via DXP pathway; isopentenyl diphosphate from 1-deoxy-D-xylulose 5-phosphate: step 2/6. Its function is as follows. Catalyzes the formation of 4-diphosphocytidyl-2-C-methyl-D-erythritol from CTP and 2-C-methyl-D-erythritol 4-phosphate (MEP). The chain is 2-C-methyl-D-erythritol 4-phosphate cytidylyltransferase from Xanthomonas oryzae pv. oryzae (strain MAFF 311018).